The chain runs to 207 residues: ATP-dependent Clp protease proteolytic subunit 1 (207 aa).

The active-site Nucleophile is the serine 103. Residue histidine 128 is part of the active site.

It belongs to the peptidase S14 family. As to quaternary structure, fourteen ClpP subunits assemble into 2 heptameric rings which stack back to back to give a disk-like structure with a central cavity, resembling the structure of eukaryotic proteasomes.

Its subcellular location is the cytoplasm. It catalyses the reaction Hydrolysis of proteins to small peptides in the presence of ATP and magnesium. alpha-casein is the usual test substrate. In the absence of ATP, only oligopeptides shorter than five residues are hydrolyzed (such as succinyl-Leu-Tyr-|-NHMec, and Leu-Tyr-Leu-|-Tyr-Trp, in which cleavage of the -Tyr-|-Leu- and -Tyr-|-Trp bonds also occurs).. In terms of biological role, cleaves peptides in various proteins in a process that requires ATP hydrolysis. Has a chymotrypsin-like activity. Plays a major role in the degradation of misfolded proteins. The polypeptide is ATP-dependent Clp protease proteolytic subunit 1 (Synechococcus sp. (strain CC9605)).